We begin with the raw amino-acid sequence, 358 residues long: NADH-quinone oxidoreductase subunit H (358 aa).

The next 8 helical transmembrane spans lie at 20 to 40 (ITVGLVVSVIVKIVIILIPLI), 95 to 115 (ALFYIGPIMSLAPSFAAWAVI), 128 to 148 (IGLLYILMITSLSVYGVIIAG), 168 to 188 (ISYEIAMSAALVCVVMVSGSM), 206 to 226 (VFSWNWLPLFPIFIVYLISAV), 253 to 273 (GFAFALFFLAEYIFMILISAL), 290 to 310 (WGFIGTPSAFWMFVKMAAVLY), and 334 to 354 (VLIPIGFAYIVVLGVWMISPL).

Belongs to the complex I subunit 1 family. In terms of assembly, NDH-1 is composed of 14 different subunits. Subunits NuoA, H, J, K, L, M, N constitute the membrane sector of the complex.

It is found in the cell inner membrane. It catalyses the reaction a quinone + NADH + 5 H(+)(in) = a quinol + NAD(+) + 4 H(+)(out). NDH-1 shuttles electrons from NADH, via FMN and iron-sulfur (Fe-S) centers, to quinones in the respiratory chain. The immediate electron acceptor for the enzyme in this species is believed to be ubiquinone. Couples the redox reaction to proton translocation (for every two electrons transferred, four hydrogen ions are translocated across the cytoplasmic membrane), and thus conserves the redox energy in a proton gradient. This subunit may bind ubiquinone. This is NADH-quinone oxidoreductase subunit H from Neisseria meningitidis serogroup C (strain 053442).